The following is a 20-amino-acid chain: Mite allergen Der p 6 (20 aa).

In terms of domain architecture, Peptidase S1 spans Ala-1–Lys-20.

The protein belongs to the peptidase S1 family.

The protein localises to the secreted. Its function is as follows. Protease that shows specificity similar to chymotrypsin. This chain is Mite allergen Der p 6 (DERP6), found in Dermatophagoides pteronyssinus (European house dust mite).